Here is a 312-residue protein sequence, read N- to C-terminus: Pantothenate kinase (312 aa).

Residue 97–104 participates in ATP binding; it reads GSVAVGKS.

Belongs to the prokaryotic pantothenate kinase family.

It localises to the cytoplasm. The catalysed reaction is (R)-pantothenate + ATP = (R)-4'-phosphopantothenate + ADP + H(+). The protein operates within cofactor biosynthesis; coenzyme A biosynthesis; CoA from (R)-pantothenate: step 1/5. This Mycolicibacterium gilvum (strain PYR-GCK) (Mycobacterium gilvum (strain PYR-GCK)) protein is Pantothenate kinase.